The sequence spans 341 residues: MSLWLEHFLTGYFQLCGLVCGWSGSRLGRLLSSTFLVLILIELVGEIETYFTEENPDNESVPAYFAKVIMGVNMAYKMIHAWIALSALFECRRFRYLLEELPPVKATSFIYRHLILEIILFACNAFLVLSEYTIRGIYLENLRYAYSLQAVRARYLQMMVLVDRLDGKLEQLHHRVISGSSDYKTLRLDYAHLAKVTRSLSHLFGLSLLLLNVLCLGDWIIVCNVYFMVAYLQVLPATLFLFGQVMFVVCPTLIKIWSICAASHRCVSKSKHLQQQLKDLPGQTPVERSQIEGFALQIMQDPIQIDVCGIYHLNLQTLAGMFFFILEALVIFLQFVSLVRT.

Position 1 (Met1) is a topological domain, cytoplasmic. Residues 2 to 22 (SLWLEHFLTGYFQLCGLVCGW) traverse the membrane as a helical segment. Topologically, residues 23–30 (SGSRLGRL) are extracellular. Residues 31–51 (LSSTFLVLILIELVGEIETYF) form a helical membrane-spanning segment. At 52–68 (TEENPDNESVPAYFAKV) the chain is on the cytoplasmic side. The chain crosses the membrane as a helical span at residues 69-89 (IMGVNMAYKMIHAWIALSALF). Over 90-113 (ECRRFRYLLEELPPVKATSFIYRH) the chain is Extracellular. A helical transmembrane segment spans residues 114–134 (LILEIILFACNAFLVLSEYTI). Topologically, residues 135 to 202 (RGIYLENLRY…LAKVTRSLSH (68 aa)) are cytoplasmic. The chain crosses the membrane as a helical span at residues 203-223 (LFGLSLLLLNVLCLGDWIIVC). Over 224-233 (NVYFMVAYLQ) the chain is Extracellular. The chain crosses the membrane as a helical span at residues 234–254 (VLPATLFLFGQVMFVVCPTLI). Over 255 to 318 (KIWSICAASH…GIYHLNLQTL (64 aa)) the chain is Cytoplasmic. A helical membrane pass occupies residues 319-339 (AGMFFFILEALVIFLQFVSLV). The Extracellular segment spans residues 340–341 (RT).

It belongs to the insect chemoreceptor superfamily. Gustatory receptor (GR) family. Gr2a subfamily. Expressed in neurons of the terminal external chemosensory organ of larvae.

Its subcellular location is the cell membrane. Its function is as follows. Probable gustatory receptor which mediates acceptance or avoidance behavior, depending on its substrates. This is Putative gustatory receptor 9a (Gr9a) from Drosophila melanogaster (Fruit fly).